Reading from the N-terminus, the 432-residue chain is Putative transferase At1g60990, chloroplastic (432 aa).

The N-terminal 57 residues, 1–57 (MNLLQSCKDMAMMMRIDSVSHITNTALLPCLYNGTVLRRRSLSLRKCGFRERKFQLR), are a transit peptide targeting the chloroplast.

This sequence belongs to the GcvT family. As to expression, expressed in young leaves (at protein level).

The protein resides in the plastid. The protein localises to the chloroplast. Its function is as follows. Folate-dependent protein involved in Fe/S cluster biogenesis. Functionally complements an E.coli mutant defective in ygfZ. The protein is Putative transferase At1g60990, chloroplastic of Arabidopsis thaliana (Mouse-ear cress).